The following is a 318-amino-acid chain: MRAFVLFAVVAMAATMAVAEQCGSQAGGATCPNCLCCSRFGWCGSTPYCGDGCQSQCSGCGGGSTPVTPTPSGGGGVSSIVSRALFDRMLLHRNDGACQAKGFYTYDAFVAAASAFRGFGTTGGTDTRKREVAAFLAQTSHETTGGWATAPDGAFAWGYCFKQERGATSNYCTPSAQWPCAPGKSYYGRGPIQLSHNYNYGPAGRAIGVDLLRNPDLVATDPTVSFKTAMWFWMTAQAPKPSSHAVITGQWSPSGTDRAAGRVPGFGVITNIVNGGIECGHGQDSRVADRIGFYKRYCDILGVGYGNNLDCYSQRPFA.

A signal peptide spans 1–19 (MRAFVLFAVVAMAATMAVA). Residues 20 to 59 (EQCGSQAGGATCPNCLCCSRFGWCGSTPYCGDGCQSQCSG) form the Chitin-binding type-1 domain. Intrachain disulfides connect C22–C37, C31–C43, C36–C49, C53–C57, C98–C160, C172–C180, and C279–C311. Catalysis depends on E142, which acts as the Proton donor.

Belongs to the glycosyl hydrolase 19 family. Chitinase class I subfamily.

It carries out the reaction Random endo-hydrolysis of N-acetyl-beta-D-glucosaminide (1-&gt;4)-beta-linkages in chitin and chitodextrins.. In terms of biological role, defense against chitin-containing fungal pathogens. The chain is 26 kDa endochitinase 1 from Hordeum vulgare (Barley).